Consider the following 1141-residue polypeptide: DNA-directed RNA polymerase subunit beta (1141 aa).

This sequence belongs to the RNA polymerase beta chain family. In terms of assembly, the RNAP catalytic core consists of 2 alpha, 1 beta, 1 beta' and 1 omega subunit. When a sigma factor is associated with the core the holoenzyme is formed, which can initiate transcription.

The enzyme catalyses RNA(n) + a ribonucleoside 5'-triphosphate = RNA(n+1) + diphosphate. In terms of biological role, DNA-dependent RNA polymerase catalyzes the transcription of DNA into RNA using the four ribonucleoside triphosphates as substrates. This Frankia casuarinae (strain DSM 45818 / CECT 9043 / HFP020203 / CcI3) protein is DNA-directed RNA polymerase subunit beta.